Consider the following 615-residue polypeptide: Medium-chain acyl-CoA ligase ACSF2, mitochondrial (615 aa).

The N-terminal 49 residues, 1-49 (MAVYLGMLRLGRLCVASLGARGPRTPLSRPWPNSKLQGVRAFSSGMVDC), are a transit peptide targeting the mitochondrion. Lysine 179 carries the N6-acetyllysine modification. N6-acetyllysine; alternate is present on lysine 182. Lysine 182 is modified (N6-succinyllysine; alternate). Lysine 199 carries the post-translational modification N6-acetyllysine. 263–271 (TSGTTGNPK) is a binding site for ATP. 2 positions are modified to N6-acetyllysine: lysine 340 and lysine 398. At lysine 478 the chain carries N6-succinyllysine. Residues aspartate 493 and arginine 508 each coordinate ATP. Lysine 510 carries the N6-acetyllysine modification. Residues lysine 544 and lysine 570 each carry the N6-acetyllysine; alternate modification. Lysine 544 and lysine 570 each carry N6-succinyllysine; alternate. Residue lysine 599 coordinates ATP. The residue at position 599 (lysine 599) is an N6-succinyllysine.

This sequence belongs to the ATP-dependent AMP-binding enzyme family.

It localises to the mitochondrion. It catalyses the reaction a medium-chain fatty acid + ATP + CoA = a medium-chain fatty acyl-CoA + AMP + diphosphate. It carries out the reaction octanoate + ATP + CoA = octanoyl-CoA + AMP + diphosphate. Its function is as follows. Acyl-CoA synthases catalyze the initial reaction in fatty acid metabolism, by forming a thioester with CoA. Has some preference toward medium-chain substrates. Plays a role in adipocyte differentiation. The chain is Medium-chain acyl-CoA ligase ACSF2, mitochondrial from Rattus norvegicus (Rat).